Reading from the N-terminus, the 580-residue chain is Arginine--tRNA ligase (580 aa).

The 'HIGH' region motif lies at 123–133 (PNLAKEMHVGH).

It belongs to the class-I aminoacyl-tRNA synthetase family. Monomer.

The protein localises to the cytoplasm. It catalyses the reaction tRNA(Arg) + L-arginine + ATP = L-arginyl-tRNA(Arg) + AMP + diphosphate. The sequence is that of Arginine--tRNA ligase from Pseudoalteromonas translucida (strain TAC 125).